Reading from the N-terminus, the 505-residue chain is Apolipoprotein N-acyltransferase (505 aa).

The next 6 helical transmembrane spans lie at Leu-23–Tyr-43, Gly-58–Asn-78, Pro-85–Leu-105, Leu-125–Phe-145, Leu-162–Leu-182, and Pro-192–Leu-212. The region spanning Ile-230–Pro-469 is the CN hydrolase domain. The Proton acceptor role is filled by Glu-269. Lys-329 is an active-site residue. Residue Cys-381 is the Nucleophile of the active site. The chain crosses the membrane as a helical span at residues Trp-482 to Ala-502.

It belongs to the CN hydrolase family. Apolipoprotein N-acyltransferase subfamily.

It is found in the cell inner membrane. It carries out the reaction N-terminal S-1,2-diacyl-sn-glyceryl-L-cysteinyl-[lipoprotein] + a glycerophospholipid = N-acyl-S-1,2-diacyl-sn-glyceryl-L-cysteinyl-[lipoprotein] + a 2-acyl-sn-glycero-3-phospholipid + H(+). It functions in the pathway protein modification; lipoprotein biosynthesis (N-acyl transfer). Its function is as follows. Catalyzes the phospholipid dependent N-acylation of the N-terminal cysteine of apolipoprotein, the last step in lipoprotein maturation. This chain is Apolipoprotein N-acyltransferase, found in Pseudomonas putida (strain ATCC 47054 / DSM 6125 / CFBP 8728 / NCIMB 11950 / KT2440).